Consider the following 198-residue polypeptide: Acireductone dioxygenase 2 (198 aa).

4 residues coordinate Fe(2+): H99, H101, E105, and H144. The Ni(2+) site is built by H99, H101, E105, and H144.

This sequence belongs to the acireductone dioxygenase (ARD) family. Requires Fe(2+) as cofactor. The cofactor is Ni(2+). In terms of tissue distribution, ubiquitous.

It is found in the cytoplasm. The protein resides in the nucleus. It catalyses the reaction 1,2-dihydroxy-5-(methylsulfanyl)pent-1-en-3-one + O2 = 4-methylsulfanyl-2-oxobutanoate + formate + 2 H(+). The enzyme catalyses 1,2-dihydroxy-5-(methylsulfanyl)pent-1-en-3-one + O2 = 3-(methylsulfanyl)propanoate + CO + formate + 2 H(+). Its pathway is amino-acid biosynthesis; L-methionine biosynthesis via salvage pathway; L-methionine from S-methyl-5-thio-alpha-D-ribose 1-phosphate: step 5/6. Its function is as follows. Catalyzes 2 different reactions between oxygen and the acireductone 1,2-dihydroxy-3-keto-5-methylthiopentene (DHK-MTPene) depending upon the metal bound in the active site. Fe-containing acireductone dioxygenase (Fe-ARD) produces formate and 2-keto-4-methylthiobutyrate (KMTB), the alpha-ketoacid precursor of methionine in the methionine recycle pathway. Ni-containing acireductone dioxygenase (Ni-ARD) produces methylthiopropionate, carbon monoxide and formate, and does not lie on the methionine recycle pathway. This Oryza sativa subsp. indica (Rice) protein is Acireductone dioxygenase 2 (ARD2).